Here is a 308-residue protein sequence, read N- to C-terminus: 1D-myo-inositol 2-acetamido-2-deoxy-alpha-D-glucopyranoside deacetylase (308 aa).

His18, Asp21, and His153 together coordinate Zn(2+).

This sequence belongs to the MshB deacetylase family. It depends on Zn(2+) as a cofactor.

The catalysed reaction is 1D-myo-inositol 2-acetamido-2-deoxy-alpha-D-glucopyranoside + H2O = 1D-myo-inositol 2-amino-2-deoxy-alpha-D-glucopyranoside + acetate. Its function is as follows. Catalyzes the deacetylation of 1D-myo-inositol 2-acetamido-2-deoxy-alpha-D-glucopyranoside (GlcNAc-Ins) in the mycothiol biosynthesis pathway. The chain is 1D-myo-inositol 2-acetamido-2-deoxy-alpha-D-glucopyranoside deacetylase from Salinispora arenicola (strain CNS-205).